Reading from the N-terminus, the 658-residue chain is Carnitine O-palmitoyltransferase 2, mitochondrial (658 aa).

A mitochondrion-targeting transit peptide spans 1–25 (MVPRLLLRAWPRGPAVGPGAPSRPL). The Mitochondrial matrix segment spans residues 26-178 (SAGSGPGQYL…GLLEPEVFHL (153 aa)). N6-succinyllysine is present on K69. N6-acetyllysine is present on K79. An N6-succinyllysine modification is found at K85. Positions 179–208 (NPAKSDTDTFKRLIRFVPSSLSWYGAYLVN) form an intramembrane region, note=Mitochondrial inner membrane. The Mitochondrial matrix segment spans residues 209–658 (AYPLDMSQYF…DALEGKSIKS (450 aa)). K239 is subject to N6-acetyllysine; alternate. Residue K239 is modified to N6-succinyllysine; alternate. N6-acetyllysine is present on K305. Residue H372 is the Proton acceptor of the active site. K418 carries the N6-acetyllysine; alternate modification. K418 carries the post-translational modification N6-succinyllysine; alternate. N6-succinyllysine occurs at positions 424 and 439. 452-464 (GKEFLKKQKLSPD) contributes to the CoA binding site. Residues Y486, S488, and T499 each contribute to the (R)-carnitine site. K510 and K544 each carry N6-acetyllysine; alternate. Residues K510 and K544 each carry the N6-succinyllysine; alternate modification.

This sequence belongs to the carnitine/choline acetyltransferase family.

It is found in the mitochondrion inner membrane. It carries out the reaction (R)-carnitine + hexadecanoyl-CoA = O-hexadecanoyl-(R)-carnitine + CoA. It catalyses the reaction octanoyl-CoA + (R)-carnitine = O-octanoyl-(R)-carnitine + CoA. The catalysed reaction is decanoyl-CoA + (R)-carnitine = O-decanoyl-(R)-carnitine + CoA. The enzyme catalyses dodecanoyl-CoA + (R)-carnitine = O-dodecanoyl-R-carnitine + CoA. It carries out the reaction tetradecanoyl-CoA + (R)-carnitine = O-tetradecanoyl-(R)-carnitine + CoA. It catalyses the reaction (R)-carnitine + octadecanoyl-CoA = O-octadecanoyl-(R)-carnitine + CoA. The catalysed reaction is eicosanoyl-CoA + (R)-carnitine = O-eicosanoyl-(R)-carnitine + CoA. The enzyme catalyses (9Z)-tetradecenoyl-CoA + (R)-carnitine = O-(9Z)-tetradecenoyl-(R)-carnitine + CoA. It carries out the reaction (5Z)-tetradecenoyl-CoA + (R)-carnitine = O-(5Z)-tetradecenoyl-(R)-carnitine + CoA. It catalyses the reaction (R)-carnitine + (9Z)-octadecenoyl-CoA = O-(9Z)-octadecenoyl-(R)-carnitine + CoA. The catalysed reaction is 4,8-dimethylnonanoyl-CoA + (R)-carnitine = O-4,8-dimethylnonanoyl-(R)-carnitine + CoA. The protein operates within lipid metabolism; fatty acid beta-oxidation. Involved in the intramitochondrial synthesis of acylcarnitines from accumulated acyl-CoA metabolites. Reconverts acylcarnitines back into the respective acyl-CoA esters that can then undergo beta-oxidation, an essential step for the mitochondrial uptake of long-chain fatty acids and their subsequent beta-oxidation in the mitochondrion. Active with medium (C8-C12) and long-chain (C14-C18) acyl-CoA esters. The polypeptide is Carnitine O-palmitoyltransferase 2, mitochondrial (CPT2) (Macaca fascicularis (Crab-eating macaque)).